Here is a 156-residue protein sequence, read N- to C-terminus: Cyanate hydratase (156 aa).

Residues Arg-96, Glu-99, and Ser-122 contribute to the active site.

The protein belongs to the cyanase family.

The enzyme catalyses cyanate + hydrogencarbonate + 3 H(+) = NH4(+) + 2 CO2. Its function is as follows. Catalyzes the reaction of cyanate with bicarbonate to produce ammonia and carbon dioxide. This is Cyanate hydratase from Photorhabdus laumondii subsp. laumondii (strain DSM 15139 / CIP 105565 / TT01) (Photorhabdus luminescens subsp. laumondii).